Here is a 1318-residue protein sequence, read N- to C-terminus: DNA-directed RNA polymerase subunit beta' (1318 aa).

The Zn(2+) site is built by Cys-221, Cys-295, Cys-302, and Cys-305.

It belongs to the RNA polymerase beta' chain family. RpoC2 subfamily. As to quaternary structure, in cyanobacteria the RNAP catalytic core is composed of 2 alpha, 1 beta, 1 beta', 1 gamma and 1 omega subunit. When a sigma factor is associated with the core the holoenzyme is formed, which can initiate transcription. Requires Zn(2+) as cofactor.

The enzyme catalyses RNA(n) + a ribonucleoside 5'-triphosphate = RNA(n+1) + diphosphate. Its function is as follows. DNA-dependent RNA polymerase catalyzes the transcription of DNA into RNA using the four ribonucleoside triphosphates as substrates. The sequence is that of DNA-directed RNA polymerase subunit beta' from Synechococcus elongatus (strain ATCC 33912 / PCC 7942 / FACHB-805) (Anacystis nidulans R2).